The chain runs to 629 residues: DNA ligase B (629 aa).

K151 serves as the catalytic N6-AMP-lysine intermediate. The span at 588-597 (LQKQHGTNTR) shows a compositional bias: polar residues. Residues 588 to 629 (LQKQHGTNTRNEQKGDVRRVDVKQDNGTTWLPEQDSNLRPND) form a disordered region. Residues 598-611 (NEQKGDVRRVDVKQ) show a composition bias toward basic and acidic residues. A compositionally biased stretch (polar residues) spans 612-629 (DNGTTWLPEQDSNLRPND).

It belongs to the NAD-dependent DNA ligase family. LigB subfamily.

The enzyme catalyses NAD(+) + (deoxyribonucleotide)n-3'-hydroxyl + 5'-phospho-(deoxyribonucleotide)m = (deoxyribonucleotide)n+m + AMP + beta-nicotinamide D-nucleotide.. Its function is as follows. Catalyzes the formation of phosphodiester linkages between 5'-phosphoryl and 3'-hydroxyl groups in double-stranded DNA using NAD as a coenzyme and as the energy source for the reaction. This Chromohalobacter salexigens (strain ATCC BAA-138 / DSM 3043 / CIP 106854 / NCIMB 13768 / 1H11) protein is DNA ligase B.